We begin with the raw amino-acid sequence, 727 residues long: Cadmium-transporting ATPase (727 aa).

In terms of domain architecture, HMA spans 12 to 75 (EMNVYRVQGF…AGAFENLKVS (64 aa)). Cd(2+) contacts are provided by Cys-23 and Cys-26. 5 helical membrane passes run 106–126 (STLL…FVNG), 130–150 (LVTS…LFKV), 171–191 (IGAT…LFAI), 336–356 (IIMV…GGSW), and 364–384 (LAVL…ISIV). The active-site 4-aspartylphosphate intermediate is Asp-415. A run of 2 helical transmembrane segments spans residues 672–694 (LNII…LLVI) and 699–721 (TLWI…SLRL).

Belongs to the cation transport ATPase (P-type) (TC 3.A.3) family. Type IB subfamily.

The protein localises to the cell membrane. The enzyme catalyses Cd(2+)(in) + ATP + H2O = Cd(2+)(out) + ADP + phosphate + H(+). Its activity is regulated as follows. Inhibited by the antibiotic bafilomycin A1. Partially inhibited by DCCD, nigericin and FCCP. In terms of biological role, couples the hydrolysis of ATP with the export of cadmium. Involved in cadmium resistance. The sequence is that of Cadmium-transporting ATPase from Staphylococcus aureus.